Consider the following 306-residue polypeptide: Ribonuclease Z (306 aa).

Zn(2+) is bound by residues His63, His65, Asp67, His68, His141, Asp211, and His269. Asp67 acts as the Proton acceptor in catalysis.

This sequence belongs to the RNase Z family. Homodimer. Requires Zn(2+) as cofactor.

The enzyme catalyses Endonucleolytic cleavage of RNA, removing extra 3' nucleotides from tRNA precursor, generating 3' termini of tRNAs. A 3'-hydroxy group is left at the tRNA terminus and a 5'-phosphoryl group is left at the trailer molecule.. Zinc phosphodiesterase, which displays some tRNA 3'-processing endonuclease activity. Probably involved in tRNA maturation, by removing a 3'-trailer from precursor tRNA. This is Ribonuclease Z from Staphylococcus aureus (strain bovine RF122 / ET3-1).